Consider the following 207-residue polypeptide: Frataxin, mitochondrial (207 aa).

A mitochondrion-targeting transit peptide spans Met-1–Gly-40.

Belongs to the frataxin family. In terms of assembly, component of the mitochondrial core iron-sulfur cluster (ISC) complex composed of NFS1, LYRM4, NDUFAB1, ISCU, FXN, and FDX2; this complex is a heterohexamer containing two copies of each monomer. Homodimer. Monomer (probable predominant form). Oligomer. Monomers and polymeric aggregates of &gt;1 MDa have been isolated from mitochondria. A small fraction of heterologous overexpressed recombinant frataxin forms high-molecular weight aggregates that incorporate iron. Interacts with LYRM4. Interacts (via ferrous form) with ISCU; the interaction is possible when both are bound to the dimeric form of the cysteine desulfurase complex (NFS1:LYRM4) and the interaction enhances FXN interaction to the dimeric form of the cysteine desulfurase complex (NFS1:LYRM4). Interacts with FECH; one iron-bound FXN monomer seems to interact with a FECH homodimer. Interacts with SDHA and SDHB. Interacts with ACO2; the interaction is dependent on citrate. Interacts with HSPA9. Component of a complex composed of FXN, NFS1, LYRM4 and ISCU. Interacts with ACO1. Interacts with ISCU (cytoplasmic form). Processed in two steps by mitochondrial processing peptidase (MPP). MPP first cleaves the precursor to intermediate form and subsequently converts the intermediate to yield frataxin mature form (frataxin(81-210)) which is the predominant form. The additional forms, frataxin(56-210) and frataxin(78-210), seem to be produced when the normal maturation process is impaired; their physiological relevance is unsure. Heart, liver, skeletal muscle, kidney, spleen and thymus. Weakly expressed in the brain and lung.

It localises to the mitochondrion. The protein localises to the cytoplasm. Its subcellular location is the cytosol. It carries out the reaction 4 Fe(2+) + O2 + 4 H(+) = 4 Fe(3+) + 2 H2O. Functionally, functions as an activator of persulfide transfer to the scaffoding protein ISCU as component of the core iron-sulfur cluster (ISC) assembly complex and participates to the [2Fe-2S] cluster assembly. Accelerates sulfur transfer from NFS1 persulfide intermediate to ISCU and to small thiols such as L-cysteine and glutathione leading to persulfuration of these thiols and ultimately sulfide release. Binds ferrous ion and is released from FXN upon the addition of both L-cysteine and reduced FDX2 during [2Fe-2S] cluster assembly. The core iron-sulfur cluster (ISC) assembly complex is involved in the de novo synthesis of a [2Fe-2S] cluster, the first step of the mitochondrial iron-sulfur protein biogenesis. This process is initiated by the cysteine desulfurase complex (NFS1:LYRM4:NDUFAB1) that produces persulfide which is delivered on the scaffold protein ISCU in a FXN-dependent manner. Then this complex is stabilized by FDX2 which provides reducing equivalents to accomplish the [2Fe-2S] cluster assembly. Finally, the [2Fe-2S] cluster is transferred from ISCU to chaperone proteins, including HSCB, HSPA9 and GLRX5. May play a role in the protection against iron-catalyzed oxidative stress through its ability to catalyze the oxidation of Fe(2+) to Fe(3+); the oligomeric form but not the monomeric form has in vitro ferroxidase activity. May be able to store large amounts of iron in the form of a ferrihydrite mineral by oligomerization; however, the physiological relevance is unsure as reports are conflicting and the function has only been shown using heterologous overexpression systems. May function as an iron chaperone protein that protects the aconitase [4Fe-4S]2+ cluster from disassembly and promotes enzyme reactivation. May play a role as a high affinity iron binding partner for FECH that is capable of both delivering iron to ferrochelatase and mediating the terminal step in mitochondrial heme biosynthesis. Modulates the RNA-binding activity of ACO1. May be involved in the cytoplasmic iron-sulfur protein biogenesis. May contribute to oxidative stress resistance and overall cell survival. The chain is Frataxin, mitochondrial from Mus musculus (Mouse).